The chain runs to 421 residues: Gamma-glutamyl phosphate reductase (421 aa).

The protein belongs to the gamma-glutamyl phosphate reductase family.

The protein localises to the cytoplasm. The catalysed reaction is L-glutamate 5-semialdehyde + phosphate + NADP(+) = L-glutamyl 5-phosphate + NADPH + H(+). The protein operates within amino-acid biosynthesis; L-proline biosynthesis; L-glutamate 5-semialdehyde from L-glutamate: step 2/2. Its function is as follows. Catalyzes the NADPH-dependent reduction of L-glutamate 5-phosphate into L-glutamate 5-semialdehyde and phosphate. The product spontaneously undergoes cyclization to form 1-pyrroline-5-carboxylate. The protein is Gamma-glutamyl phosphate reductase of Pseudomonas syringae pv. tomato (strain ATCC BAA-871 / DC3000).